Here is a 201-residue protein sequence, read N- to C-terminus: Elongation factor Ts (201 aa).

An involved in Mg(2+) ion dislocation from EF-Tu region spans residues threonine 83–valine 86.

It belongs to the EF-Ts family.

The protein resides in the cytoplasm. Functionally, associates with the EF-Tu.GDP complex and induces the exchange of GDP to GTP. It remains bound to the aminoacyl-tRNA.EF-Tu.GTP complex up to the GTP hydrolysis stage on the ribosome. This is Elongation factor Ts from Methylacidiphilum infernorum (isolate V4) (Methylokorus infernorum (strain V4)).